The primary structure comprises 299 residues: Ankyrin repeat domain-containing protein 54 (299 aa).

The disordered stretch occupies residues 1–32; that stretch reads MAAAAGGADDESRSGRSSSDGECAVAPEPLTG. Ala-2 carries the N-acetylalanine modification. A phosphoserine mark is found at Ser-57 and Ser-62. The Nuclear localization signal (NLS) signature appears at 98 to 116; the sequence is RRLGPTGKEVHALKRLRDS. ANK repeat units lie at residues 108-137, 141-170, 174-203, and 207-239; these read HALK…DPCA, KGRT…DPNQ, LGNT…RVDA, and AGRT…EVKQ. The LYN-binding stretch occupies residues 140–240; the sequence is DKGRTALHFA…EAVRLEVKQI (101 aa). The Nuclear export signal (NES) motif lies at 282–292; the sequence is LLASFTSLSLQ.

As to quaternary structure, interacts (via ankyrin repeat region) with LYN (via SH3-domain) in an activation-independent status of LYN. Forms a multiprotein complex with LYN and HCLS1. Interacts with TSN2, VAV1, DBNL and LASP1.

The protein resides in the nucleus. Its subcellular location is the cytoplasm. It localises to the midbody. Plays an important role in regulating intracellular signaling events associated with erythroid terminal differentiation. This is Ankyrin repeat domain-containing protein 54 (ANKRD54) from Bos taurus (Bovine).